The following is a 99-amino-acid chain: MKFFVVAALFAGALAAPTELEARTYPVVLCPEGLYANPVCADVDVLGILCLNAVSPSEAPRDANHFREICAKIGKQARCAVLPVLNQAVLCNKPVGITN.

An N-terminal signal peptide occupies residues 1 to 15; the sequence is MKFFVVAALFAGALA. Intrachain disulfides connect Cys30–Cys79 and Cys40–Cys70.

Belongs to the cerato-ulmin hydrophobin family. Homotetramer. Further self-assembles to form highly ordered films at water-air interfaces through intermolecular interactions.

It is found in the secreted. The protein localises to the cell wall. In terms of biological role, aerial growth, conidiation, and dispersal of filamentous fungi in the environment rely upon a capability of their secreting small amphipathic proteins called hydrophobins (HPBs) with low sequence identity. Class I can self-assemble into an outermost layer of rodlet bundles on aerial cell surfaces, conferring cellular hydrophobicity that supports fungal growth, development and dispersal; whereas Class II form highly ordered films at water-air interfaces through intermolecular interactions but contribute nothing to the rodlet structure. HYD2 is a class II hydrophobin that contributes to the fruiting body development. The chain is Class II hydrophobin 2 from Cordyceps militaris (Caterpillar fungus).